Reading from the N-terminus, the 172-residue chain is Small ribosomal subunit protein uS5 (172 aa).

Positions 17–80 (LREKMISVNR…EQARRNMFKV (64 aa)) constitute an S5 DRBM domain.

Belongs to the universal ribosomal protein uS5 family. As to quaternary structure, part of the 30S ribosomal subunit. Contacts proteins S4 and S8.

Functionally, with S4 and S12 plays an important role in translational accuracy. Its function is as follows. Located at the back of the 30S subunit body where it stabilizes the conformation of the head with respect to the body. This Paraburkholderia phymatum (strain DSM 17167 / CIP 108236 / LMG 21445 / STM815) (Burkholderia phymatum) protein is Small ribosomal subunit protein uS5.